A 150-amino-acid polypeptide reads, in one-letter code: 6,7-dimethyl-8-ribityllumazine synthase (150 aa).

5-amino-6-(D-ribitylamino)uracil is bound by residues Phe-11, 42-44 (IFE), and 73-75 (CAI). A (2S)-2-hydroxy-3-oxobutyl phosphate-binding site is contributed by 78 to 79 (ES). Residue His-81 is the Proton donor of the active site. Asn-106 is a binding site for 5-amino-6-(D-ribitylamino)uracil. A (2S)-2-hydroxy-3-oxobutyl phosphate-binding site is contributed by Arg-120.

It belongs to the DMRL synthase family.

The enzyme catalyses (2S)-2-hydroxy-3-oxobutyl phosphate + 5-amino-6-(D-ribitylamino)uracil = 6,7-dimethyl-8-(1-D-ribityl)lumazine + phosphate + 2 H2O + H(+). The protein operates within cofactor biosynthesis; riboflavin biosynthesis; riboflavin from 2-hydroxy-3-oxobutyl phosphate and 5-amino-6-(D-ribitylamino)uracil: step 1/2. In terms of biological role, catalyzes the formation of 6,7-dimethyl-8-ribityllumazine by condensation of 5-amino-6-(D-ribitylamino)uracil with 3,4-dihydroxy-2-butanone 4-phosphate. This is the penultimate step in the biosynthesis of riboflavin. This is 6,7-dimethyl-8-ribityllumazine synthase from Paramagnetospirillum magneticum (strain ATCC 700264 / AMB-1) (Magnetospirillum magneticum).